The following is a 347-amino-acid chain: N-acetyl-gamma-glutamyl-phosphate reductase (347 aa).

Cysteine 152 is an active-site residue.

It belongs to the NAGSA dehydrogenase family. Type 1 subfamily.

Its subcellular location is the cytoplasm. The catalysed reaction is N-acetyl-L-glutamate 5-semialdehyde + phosphate + NADP(+) = N-acetyl-L-glutamyl 5-phosphate + NADPH + H(+). Its pathway is amino-acid biosynthesis; L-arginine biosynthesis; N(2)-acetyl-L-ornithine from L-glutamate: step 3/4. Functionally, catalyzes the NADPH-dependent reduction of N-acetyl-5-glutamyl phosphate to yield N-acetyl-L-glutamate 5-semialdehyde. This Neisseria gonorrhoeae (strain NCCP11945) protein is N-acetyl-gamma-glutamyl-phosphate reductase.